Consider the following 84-residue polypeptide: Small ribosomal subunit protein bS20 (84 aa).

Positions 1–28 (MPNIKSAIKRVKTADTRNSRNASQRSAM) are disordered.

Belongs to the bacterial ribosomal protein bS20 family.

Its function is as follows. Binds directly to 16S ribosomal RNA. In Listeria welshimeri serovar 6b (strain ATCC 35897 / DSM 20650 / CCUG 15529 / CIP 8149 / NCTC 11857 / SLCC 5334 / V8), this protein is Small ribosomal subunit protein bS20.